The sequence spans 314 residues: A-kinase anchor protein 7 isoform gamma (314 aa).

Residues 1 to 46 (MPFAAVDIQDDCGSPDVPQANPKRSKEEEEDRGDKNDHVKKRKKAK) are disordered. Basic and acidic residues predominate over residues 24-37 (RSKEEEEDRGDKND). AMP is bound by residues threonine 95 and 185 to 187 (HLT). CMP contacts are provided by residues threonine 95 and 185 to 187 (HLT). A PKA-RII-alpha subunit binding domain region spans residues 260 to 314 (AELVRLSKRLVENAVLKAVQQYLEETQNKKQPGEGNSTKAEEGDRNGDGSDNNRK). Residues 261–285 (ELVRLSKRLVENAVLKAVQQYLEET) form an RI-alpha-binding region. The interval 262–275 (LVRLSKRLVENAVL) is RII-binding. Residues 281–314 (YLEETQNKKQPGEGNSTKAEEGDRNGDGSDNNRK) are disordered. Over residues 298–314 (KAEEGDRNGDGSDNNRK) the composition is skewed to basic and acidic residues.

In terms of assembly, binds cAMP-dependent protein kinase (PKA). Interacts with PRKCA; only the cytoplasmic form is capable of interacting with PRKCA. Expressed in oocytes.

Its subcellular location is the nucleus. The protein localises to the cytoplasm. In terms of biological role, probably targets cAMP-dependent protein kinase (PKA) to the cellular membrane or cytoskeletal structures. The membrane-associated form reduces epithelial sodium channel (ENaC) activity, whereas the free cytoplasmic form may negatively regulate ENaC channel feedback inhibition by intracellular sodium. The protein is A-kinase anchor protein 7 isoform gamma of Mus musculus (Mouse).